We begin with the raw amino-acid sequence, 142 residues long: MYSKTIPAMLAIITVAYLCALPHAHARSTQGYGRMDRILAALKTSPMEPSAALAVENGTTHPLEKRQIYDTSCKGVYDRALFNDLEHVCDDCYNLYRTSYVASACRSNCYSNLVFRQCMDDLLMMDEFDQYARKVQMVGRKK.

The N-terminal stretch at 1–26 (MYSKTIPAMLAIITVAYLCALPHAHA) is a signal peptide. Pyrrolidone carboxylic acid; partial is present on Gln-67. 3 disulfide bridges follow: Cys-73–Cys-109, Cys-89–Cys-105, and Cys-92–Cys-118. Val-138 is modified (valine amide).

It belongs to the arthropod CHH/MIH/GIH/VIH hormone family. The N-terminus is blocked only in isoform CHH-II but not in isoform CHH-I. Produced by the medulla terminalis X-organ in the eyestalks and transported to the sinus gland where they are stored and released.

It localises to the secreted. In terms of biological role, hormone found in the sinus gland of isopods and decapods which controls the blood sugar level. Has a secretagogue action over the amylase released from the midgut gland. May act as a stress hormone and may be involved in the control of molting and reproduction. The protein is Crustacean hyperglycemic hormones of Carcinus maenas (Common shore crab).